A 382-amino-acid chain; its full sequence is MSIYTRPVMLLLSGLLLLTLAIAVLNTLVPLWLAHEHLPTWQVGMVSSSYFTGNLVGTLLTGYLIKRLGFNRSYYLASLVFAAGCLGLGLMIGFWSWMAWRFVAGVGCAMIWVVVESALMCSGTSRNRGRLLAAYMMIYYVGTFLGQLLVSKVSTELMNVLPWVTALILAGILPLLFTRILSQQTESRKTTSITSMLKLRQARLGVNGCIISGIVLGSLYGLMPLYLNHQGISNSNIGFWMAVLVSAGIVGQWPIGRLADKFGRLLVLRVQIFVVILGSIAMLTHTAMAPALFILGAAGFTLYPVAMAWSCEKVSQDQLVAMNQALLLSYTIGSLLGPSFTAMLMQHYSDNLLFIMIASVSFIYLLMLLRNARHTSNPVAHV.

The next 12 helical transmembrane spans lie at 14–34, 45–65, 79–99, 102–122, 131–151, 157–177, 204–224, 236–256, 265–285, 289–309, 325–345, and 349–369; these read GLLLLTLAIAVLNTLVPLWLA, MVSSSYFTGNLVGTLLTGYLI, LVFAAGCLGLGLMIGFWSWMA, FVAGVGCAMIWVVVESALMCS, LLAAYMMIYYVGTFLGQLLVS, LMNVLPWVTALILAGILPLLF, LGVNGCIISGIVLGSLYGLMP, NIGFWMAVLVSAGIVGQWPIG, LLVLRVQIFVVILGSIAMLTH, APALFILGAAGFTLYPVAMAW, ALLLSYTIGSLLGPSFTAMLM, and SDNLLFIMIASVSFIYLLMLL.

It belongs to the major facilitator superfamily. YcaD (TC 2.A.1.26) family.

It localises to the cell inner membrane. This is an uncharacterized protein from Escherichia fergusonii (strain ATCC 35469 / DSM 13698 / CCUG 18766 / IAM 14443 / JCM 21226 / LMG 7866 / NBRC 102419 / NCTC 12128 / CDC 0568-73).